We begin with the raw amino-acid sequence, 87 residues long: Virulence protein PagD (87 aa).

Residues 1-20 (MKHHAFMLWSLLIFSFHVLA) form the signal peptide. Residues 46-87 (QPPTNTDKKQARQISSPSCPTTKPMMSAPVNDARKGNTFSRT) form a disordered region. The span at 57–66 (RQISSPSCPT) shows a compositional bias: polar residues.

Functionally, putative function in virulence. Could be involved in promoting S.typhimurium survival within macrophages. In Salmonella typhimurium (strain LT2 / SGSC1412 / ATCC 700720), this protein is Virulence protein PagD (pagD).